The primary structure comprises 494 residues: Alpha-amylase-related protein (494 aa).

Residues 1–20 form the signal peptide; that stretch reads MIKFALALTLCLAGASLSLA. Glutamine 21 bears the Pyrrolidone carboxylic acid mark. A disulfide bridge links cysteine 48 with cysteine 104. The Ca(2+) site is built by asparagine 118, glutamine 169, and aspartate 178. Cysteine 157 and cysteine 171 are oxidised to a cystine. Residue arginine 206 participates in chloride binding. The Nucleophile role is filled by aspartate 208. Histidine 212 serves as a coordination point for Ca(2+). The active-site Proton donor is the glutamate 245. Chloride contacts are provided by asparagine 308 and arginine 343. 3 disulfide bridges follow: cysteine 376–cysteine 382, cysteine 418–cysteine 441, and cysteine 448–cysteine 460.

Belongs to the glycosyl hydrolase 13 family. As to quaternary structure, monomer. Ca(2+) serves as cofactor. It depends on chloride as a cofactor.

It is found in the secreted. The catalysed reaction is Endohydrolysis of (1-&gt;4)-alpha-D-glucosidic linkages in polysaccharides containing three or more (1-&gt;4)-alpha-linked D-glucose units.. This chain is Alpha-amylase-related protein (Amyrel), found in Drosophila serrata (Fruit fly).